Consider the following 493-residue polypeptide: E3 ubiquitin-protein ligase TRIM35 (493 aa).

The residue at position 1 (Met1) is an N-acetylmethionine. Residues Ser4 and Ser8 each carry the phosphoserine modification. An RING-type zinc finger spans residues 21–61 (CAVCYDPFRDAVTLRCGHNFCRGCVSRCWEVQVSPTCPVCK). The B box-type zinc-finger motif lies at 96–137 (RFSRVCRLHRGQLSLFCLEDKELLCCSCQADPRHQGHRVQPV). Residues Cys101, His104, Cys123, and His129 each contribute to the Zn(2+) site. Residues 210–251 (AEETRQKQLLADEKMKQLTEETEVLAHEIERLQMEMKEDDVS) adopt a coiled-coil conformation. The B30.2/SPRY domain occupies 284–487 (LGSLQYRVWK…LRICPLHISV (204 aa)).

This sequence belongs to the TRIM/RBCC family. As to quaternary structure, interacts with PKM isoform M2, but not isoform M1; this interaction may compete with that between PKM and FGFR1, and hence reduces FGFR1-dependent tyrosine phosphorylation of PKM. Interacts with IRF7; this interaction promotes IRF7 proteasomal degradation. Interacts with TRAF3; this interaction promotes TRAF3 activation.

Its subcellular location is the cytoplasm. The protein localises to the nucleus. The enzyme catalyses S-ubiquitinyl-[E2 ubiquitin-conjugating enzyme]-L-cysteine + [acceptor protein]-L-lysine = [E2 ubiquitin-conjugating enzyme]-L-cysteine + N(6)-ubiquitinyl-[acceptor protein]-L-lysine.. The protein operates within protein modification; protein ubiquitination. Functionally, E3 ubiquitin-protein ligase that participates in multiple biological processes including cell death, glucose metabolism, and in particular, the innate immune response. Mediates 'Lys-63'-linked polyubiquitination of TRAF3 thereby promoting type I interferon production via RIG-I signaling pathway. Can also catalyze 'Lys-48'-linked polyubiquitination and proteasomal degradation of viral proteins such as influenza virus PB2. Acts as a negative feedback regulator of TLR7- and TLR9-triggered signaling. Mechanistically, promotes the 'Lys-48'-linked ubiquitination of IRF7 and induces its degradation via a proteasome-dependent pathway. Reduces FGFR1-dependent tyrosine phosphorylation of PKM, inhibiting PKM-dependent lactate production, glucose metabolism, and cell growth. This chain is E3 ubiquitin-protein ligase TRIM35 (TRIM35), found in Homo sapiens (Human).